We begin with the raw amino-acid sequence, 163 residues long: MITTGRVWKFWDNVSTDEITPGRYNLTKDPQELARIAFIEVRPEFAEKVRRGDVVVGGKNFGIGSSRESAALALKAAGVSGIIAKSFGRIFYRNAVNLGIPLLIGDTDELEDGDVITVNWETGEVRKNGQTLQFEPLPGFLLEIVREGGILEFIRRRGDLCIG.

It belongs to the LeuD family. LeuD type 2 subfamily. In terms of assembly, heterodimer of LeuC and LeuD.

It carries out the reaction (2R,3S)-3-isopropylmalate = (2S)-2-isopropylmalate. It participates in amino-acid biosynthesis; L-leucine biosynthesis; L-leucine from 3-methyl-2-oxobutanoate: step 2/4. Functionally, catalyzes the isomerization between 2-isopropylmalate and 3-isopropylmalate, via the formation of 2-isopropylmaleate. This Pyrococcus abyssi (strain GE5 / Orsay) protein is 3-isopropylmalate dehydratase small subunit 2 (leuD2).